We begin with the raw amino-acid sequence, 298 residues long: Glutamyl-Q tRNA(Asp) synthetase (298 aa).

L-glutamate contacts are provided by residues 8-12 (RFAPS) and Glu-44. Residues 11–21 (PSPTGPLHFGS) carry the 'HIGH' region motif. Residues Cys-100, Cys-102, Tyr-123, and Cys-127 each contribute to the Zn(2+) site. Tyr-183 and Arg-201 together coordinate L-glutamate. The 'KMSKS' region signature appears at 239 to 243 (KLSKQ). Residue Lys-242 participates in ATP binding.

The protein belongs to the class-I aminoacyl-tRNA synthetase family. GluQ subfamily. It depends on Zn(2+) as a cofactor.

Catalyzes the tRNA-independent activation of glutamate in presence of ATP and the subsequent transfer of glutamate onto a tRNA(Asp). Glutamate is transferred on the 2-amino-5-(4,5-dihydroxy-2-cyclopenten-1-yl) moiety of the queuosine in the wobble position of the QUC anticodon. This chain is Glutamyl-Q tRNA(Asp) synthetase, found in Burkholderia orbicola (strain AU 1054).